Here is a 266-residue protein sequence, read N- to C-terminus: Tryptophan synthase alpha chain (266 aa).

Residues glutamate 47 and aspartate 58 each act as proton acceptor in the active site.

Belongs to the TrpA family. Tetramer of two alpha and two beta chains.

It carries out the reaction (1S,2R)-1-C-(indol-3-yl)glycerol 3-phosphate + L-serine = D-glyceraldehyde 3-phosphate + L-tryptophan + H2O. It participates in amino-acid biosynthesis; L-tryptophan biosynthesis; L-tryptophan from chorismate: step 5/5. Functionally, the alpha subunit is responsible for the aldol cleavage of indoleglycerol phosphate to indole and glyceraldehyde 3-phosphate. The polypeptide is Tryptophan synthase alpha chain (Leptospira biflexa serovar Patoc (strain Patoc 1 / Ames)).